The primary structure comprises 179 residues: MGQLIAKLMSIFGNQEHTVIIVGLDNEGKTTILYRFLTNEVVHMCPTIGSNVEEIILPKTHFFMWDIVRPEALSFIWNTYYSNTEFIILVIDSTDRDRLLTTREELYKMLAHEALQDASVLIFANKQDVKDSMRMVEISHFLTLSTIKDHSWHIQGCCALTREGLPARLQWMESQAAAN.

Residue G2 is the site of N-myristoyl glycine attachment. Residues 23–30, 66–70, and 125–128 contribute to the GTP site; these read GLDNEGKT, DIVRP, and NKQD.

The protein belongs to the small GTPase superfamily. Arf family.

Its function is as follows. Binds and exchanges GTP and GDP. The polypeptide is Putative ADP-ribosylation factor-like protein 5C (ARL5C) (Homo sapiens (Human)).